The chain runs to 1086 residues: Rh5-interacting protein (1086 aa).

The signal sequence occupies residues 1–19 (MFRIFFTLLIIILIKKTSA). Residues asparagine 103, asparagine 144, asparagine 228, asparagine 303, asparagine 334, asparagine 480, asparagine 498, asparagine 506, asparagine 526, and asparagine 646 are each glycosylated (N-linked (GlcNAc...) asparagine). EGF-like domains follow at residues 287–321 (RCTQ…NNCE) and 325–362 (LCTV…NKCY). 7 EGF-like domains span residues 636-675 (SCSN…KLCE), 679-715 (DCES…GKCV), 719-753 (KCDL…GVCI), 818-854 (YCKD…GECI), 858-897 (SCLI…GKCV), 901-938 (KCVH…GVCL), and 942-979 (PCLK…DSCV). 2 N-linked (GlcNAc...) asparagine glycosylation sites follow: asparagine 964 and asparagine 1021.

As to quaternary structure, component of the PfRH5 adhesion complex composed of 1 copy of CyRPA, RH5 and RIPR; the complex is formed during merozoite invasion of host erythrocytes specifically at the interface between the parasite and host membranes. Within the complex, interacts with CyRPA. CyRPA recruitment of RIPR to RH5-P113-BSG leads to the formation of the PfRH5 adhesion complex which probably in turn releases RH5 from P113 while maintaining the interaction of the PfRH5 adhesion complex with BSG. In terms of processing, proteolytically cleaved into two chains of 125kDa and 65kDa which remain associated. The cleavage occurs at the schizont stage prior to the release of merozoites. Contains disulfide bonds.

The protein resides in the secreted. It is found in the cytoplasmic vesicle. It localises to the secretory vesicle. The protein localises to the microneme lumen. Its subcellular location is the cell membrane. The protein resides in the host cell membrane. Functionally, essential for the invasion of host erythrocytes by blood stage merozoites. As part of the PfRH5 adhesion complex, facilitates the interaction of RH5 and human BSG required for the Ca(2+) release into the erythrocyte. The protein is Rh5-interacting protein (RIPR) of Plasmodium falciparum (isolate 3D7).